A 91-amino-acid chain; its full sequence is C-C motif chemokine 5 (91 aa).

A signal peptide spans 1–23 (MKISAAALTIILTAAALCTPAPA). Intrachain disulfides connect C33-C57 and C34-C73.

Belongs to the intercrine beta (chemokine CC) family. T-cell and macrophage specific.

It is found in the secreted. Functionally, chemoattractant for blood monocytes, memory T-helper cells and eosinophils. Causes the release of histamine from basophils and activates eosinophils. May activate several chemokine receptors including CCR1, CCR3, CCR4 and CCR5. May also be an agonist of the G protein-coupled receptor GPR75. Together with GPR75, may play a role in neuron survival through activation of a downstream signaling pathway involving the PI3, Akt and MAP kinases. By activating GPR75 may also play a role in insulin secretion by islet cells. The protein is C-C motif chemokine 5 (Ccl5) of Mus musculus (Mouse).